A 145-amino-acid chain; its full sequence is Neutral phospholipase A2 paradoxin-like beta chain (145 aa).

A signal peptide spans 1–27 (MHPAHLLVLLAVCVSLLGASDIPPLPL). 7 cysteine pairs are disulfide-bonded: Cys-38–Cys-98, Cys-54–Cys-144, Cys-56–Cys-72, Cys-71–Cys-125, Cys-78–Cys-118, Cys-87–Cys-111, and Cys-105–Cys-116.

This sequence belongs to the phospholipase A2 family. Group I subfamily. N49 sub-subfamily. Heterotrimer of alpha, beta, and gamma chains; non-covalently linked. Expressed by the venom gland.

The protein resides in the secreted. Its function is as follows. Heterotrimer: Snake venom phospholipase A2 (PLA2) heterotrimer that acts as a potent presynaptic neurotoxin by blocking synaptic transmission and synaptic vesicle recycling. May act by binding in a calcium-dependent fashion to neurotonal pentraxin-1 (NPTX1) and neurotonal pentraxin-2 (NPTX2), but not to neuronal pentraxin receptor (NPTXR). Also binds to taipoxin-associated calcium binding protein 49 (RCN2), a protein localized in the lumen of endoplasmic reticulum. Functionally, monomer (beta chain): Snake venom phospholipase A2 homolog that is neither toxic nor enzymatically active. Does not bind calcium. The chain is Neutral phospholipase A2 paradoxin-like beta chain from Oxyuranus microlepidotus (Inland taipan).